The chain runs to 208 residues: uncharacterized protein (208 aa).

This is an uncharacterized protein from Methanocaldococcus jannaschii (strain ATCC 43067 / DSM 2661 / JAL-1 / JCM 10045 / NBRC 100440) (Methanococcus jannaschii).